The primary structure comprises 441 residues: Ribulose bisphosphate carboxylase (441 aa).

Catalysis depends on lysine 160, which acts as the Proton acceptor. Position 162 (lysine 162) interacts with substrate. 3 residues coordinate Mg(2+): lysine 186, aspartate 188, and glutamate 189. Position 186 is an N6-carboxylysine (lysine 186). The active-site Proton acceptor is the histidine 278. Substrate-binding positions include arginine 279, histidine 311, 364 to 366 (SGG), and 386 to 389 (QVGG).

It belongs to the RuBisCO large chain family. Type III subfamily. As to quaternary structure, homodimer. In contrast to form I RuBisCO, the form III RuBisCO is composed solely of large subunits. Requires Mg(2+) as cofactor.

The enzyme catalyses 2 (2R)-3-phosphoglycerate + 2 H(+) = D-ribulose 1,5-bisphosphate + CO2 + H2O. It catalyses the reaction D-ribulose 1,5-bisphosphate + O2 = 2-phosphoglycolate + (2R)-3-phosphoglycerate + 2 H(+). With respect to regulation, reversibly inhibited by O(2). Catalyzes the addition of molecular CO(2) and H(2)O to ribulose 1,5-bisphosphate (RuBP), generating two molecules of 3-phosphoglycerate (3-PGA). Functions in an archaeal AMP degradation pathway, together with AMP phosphorylase and R15P isomerase. In Archaeoglobus fulgidus (strain ATCC 49558 / DSM 4304 / JCM 9628 / NBRC 100126 / VC-16), this protein is Ribulose bisphosphate carboxylase.